The sequence spans 333 residues: Ribosomal RNA small subunit methyltransferase H (333 aa).

Residues 43-45, Asp-62, Tyr-89, Asp-110, and Gln-117 each bind S-adenosyl-L-methionine; that span reads GGH. The tract at residues 312–333 is disordered; it reads RLRAARRIRTTPTRPSPRRRRP.

It belongs to the methyltransferase superfamily. RsmH family.

It is found in the cytoplasm. The catalysed reaction is cytidine(1402) in 16S rRNA + S-adenosyl-L-methionine = N(4)-methylcytidine(1402) in 16S rRNA + S-adenosyl-L-homocysteine + H(+). Functionally, specifically methylates the N4 position of cytidine in position 1402 (C1402) of 16S rRNA. The protein is Ribosomal RNA small subunit methyltransferase H of Beutenbergia cavernae (strain ATCC BAA-8 / DSM 12333 / CCUG 43141 / JCM 11478 / NBRC 16432 / NCIMB 13614 / HKI 0122).